Consider the following 223-residue polypeptide: Thymidine kinase (223 aa).

ATP is bound by residues Gly19 to Thr26 and Asp96 to Gln99. The active-site Proton acceptor is Glu97. Zn(2+) is bound by residues Cys153, Cys156, Cys191, and His194.

It belongs to the thymidine kinase family. In terms of assembly, homotetramer.

The protein resides in the cytoplasm. It catalyses the reaction thymidine + ATP = dTMP + ADP + H(+). The sequence is that of Thymidine kinase from Ureaplasma urealyticum serovar 10 (strain ATCC 33699 / Western).